Reading from the N-terminus, the 350-residue chain is Blue-sensitive opsin (350 aa).

At 1-36 (MNGTEGPNFYVPMSNATGVVRSPFEYPQYYLAEPWA) the chain is on the extracellular side. N-linked (GlcNAc...) asparagine glycans are attached at residues Asn-2 and Asn-15. A helical membrane pass occupies residues 37-61 (FSILAAYMFFLIITGFPINFLTLYV). Over 62-73 (TIEHKKLRTPLN) the chain is Cytoplasmic. The helical transmembrane segment at 74–98 (YILLNLAVADLFMVFGGFTTTMYTS) threads the bilayer. Residues 99-113 (MHGYFVFGETGCNLE) lie on the Extracellular side of the membrane. Cys-110 and Cys-187 are oxidised to a cystine. The helical transmembrane segment at 114–133 (GYFATLGGEISLWSLVVLAI) threads the bilayer. Topologically, residues 134-152 (ERWVVVCKPISNFRFGENH) are cytoplasmic. Residues 153 to 176 (AIMGLTLTWVMANACAMPPLFGWS) traverse the membrane as a helical segment. Over 177-202 (RYIPEGLQCSCGIDYYTLKPEVNNES) the chain is Extracellular. Residue Asn-200 is glycosylated (N-linked (GlcNAc...) asparagine). The helical transmembrane segment at 203 to 230 (FVIYMFLVHFTIPLTIISFCYGRLVCAV) threads the bilayer. Topologically, residues 231 to 252 (KEAAAQQQESETTQRAEREVTR) are cytoplasmic. The helical transmembrane segment at 253–276 (MVVIMVISFLVCWIPYASVAWYIF) threads the bilayer. Residues 277–284 (THQGSTFG) are Extracellular-facing. The helical transmembrane segment at 285–309 (PIFMTVPSFFAKSSSIYNPMIYICM) threads the bilayer. Lys-296 bears the N6-(retinylidene)lysine mark. Topologically, residues 310–350 (NKQFRNCMITTLFCGKNPFEGEEEGSTTKTEASAVSSVSPA) are cytoplasmic. The segment at 330–350 (GEEEGSTTKTEASAVSSVSPA) is disordered.

This sequence belongs to the G-protein coupled receptor 1 family. Opsin subfamily. In terms of processing, phosphorylated on some or all of the serine and threonine residues present in the C-terminal region. In terms of tissue distribution, rod shaped photoreceptor cells which mediates vision in dim light.

The protein localises to the membrane. Visual pigments are the light-absorbing molecules that mediate vision. They consist of an apoprotein, opsin, covalently linked to cis-retinal. This is Blue-sensitive opsin from Conger conger (Conger eel).